A 235-amino-acid polypeptide reads, in one-letter code: Ubiquinone/menaquinone biosynthesis C-methyltransferase UbiE (235 aa).

S-adenosyl-L-methionine-binding residues include Thr-60, Asp-81, and Ser-126.

It belongs to the class I-like SAM-binding methyltransferase superfamily. MenG/UbiE family.

It carries out the reaction a 2-demethylmenaquinol + S-adenosyl-L-methionine = a menaquinol + S-adenosyl-L-homocysteine + H(+). The catalysed reaction is a 2-methoxy-6-(all-trans-polyprenyl)benzene-1,4-diol + S-adenosyl-L-methionine = a 5-methoxy-2-methyl-3-(all-trans-polyprenyl)benzene-1,4-diol + S-adenosyl-L-homocysteine + H(+). The protein operates within quinol/quinone metabolism; menaquinone biosynthesis; menaquinol from 1,4-dihydroxy-2-naphthoate: step 2/2. It participates in cofactor biosynthesis; ubiquinone biosynthesis. Its function is as follows. Methyltransferase required for the conversion of demethylmenaquinol (DMKH2) to menaquinol (MKH2) and the conversion of 2-polyprenyl-6-methoxy-1,4-benzoquinol (DDMQH2) to 2-polyprenyl-3-methyl-6-methoxy-1,4-benzoquinol (DMQH2). The chain is Ubiquinone/menaquinone biosynthesis C-methyltransferase UbiE from Citrifermentans bemidjiense (strain ATCC BAA-1014 / DSM 16622 / JCM 12645 / Bem) (Geobacter bemidjiensis).